A 165-amino-acid chain; its full sequence is SsrA-binding protein (165 aa).

Basic and acidic residues predominate over residues 135–158; that stretch reads QAHDKRQDMARRDAQREVTRELGR. The segment at 135 to 165 is disordered; sequence QAHDKRQDMARRDAQREVTRELGRRVKGMTS.

The protein belongs to the SmpB family.

It localises to the cytoplasm. Required for rescue of stalled ribosomes mediated by trans-translation. Binds to transfer-messenger RNA (tmRNA), required for stable association of tmRNA with ribosomes. tmRNA and SmpB together mimic tRNA shape, replacing the anticodon stem-loop with SmpB. tmRNA is encoded by the ssrA gene; the 2 termini fold to resemble tRNA(Ala) and it encodes a 'tag peptide', a short internal open reading frame. During trans-translation Ala-aminoacylated tmRNA acts like a tRNA, entering the A-site of stalled ribosomes, displacing the stalled mRNA. The ribosome then switches to translate the ORF on the tmRNA; the nascent peptide is terminated with the 'tag peptide' encoded by the tmRNA and targeted for degradation. The ribosome is freed to recommence translation, which seems to be the essential function of trans-translation. This is SsrA-binding protein from Mycolicibacterium vanbaalenii (strain DSM 7251 / JCM 13017 / BCRC 16820 / KCTC 9966 / NRRL B-24157 / PYR-1) (Mycobacterium vanbaalenii).